We begin with the raw amino-acid sequence, 849 residues long: Pre-mRNA-processing ATP-dependent RNA helicase PRP5 (849 aa).

Positions 13–81 (ESLLEERRKK…RKRKNEFRKS (69 aa)) form a coiled coil. The interval 28–138 (QKKAQFDAQK…PEHDNEKDPL (111 aa)) is disordered. Positions 38–54 (ENQTSRNDIVTNSLEGK) are enriched in polar residues. Residues 55–85 (QTTEKFTERQERVKEELRKRKNEFRKSDEPV) are compositionally biased toward basic and acidic residues. Basic residues predominate over residues 89–102 (PSKKKSKRSKVKKK). Residues 120 to 138 (RSKEHIQKVPEHDNEKDPL) are compositionally biased toward basic and acidic residues. The short motif at 255–284 (TKWSQLGLSTDTMVLITEKLHFGSLTPIQS) is the Q motif element. Positions 287–467 (LPAIMSGRDV…VRVLHSPISI (181 aa)) constitute a Helicase ATP-binding domain. Residue 300-307 (SKTGSGKT) coordinates ATP. Positions 415-418 (DEAD) match the DEAD box motif. Residues 502 to 661 (ERSEFFDEVQ…LDPLQAKELQ (160 aa)) form the Helicase C-terminal domain. Residues 689–728 (NIKSKREEAQNKDLELKKNDKRSDDLEKKINNPHEGHDSE) show a composition bias toward basic and acidic residues. Positions 689-731 (NIKSKREEAQNKDLELKKNDKRSDDLEKKINNPHEGHDSEPES) are disordered.

The protein belongs to the DEAD box helicase family. DDX46/PRP5 subfamily. In terms of assembly, interacts with the U2 snRNP and HSH155.

Its subcellular location is the nucleus. It carries out the reaction ATP + H2O = ADP + phosphate + H(+). Its function is as follows. ATP-dependent RNA helicase involved spliceosome assembly and in nuclear splicing. Catalyzes an ATP-dependent conformational change of U2 snRNP. Bridges U1 and U2 snRNPs and enables stable U2 snRNP association with intron RNA. The polypeptide is Pre-mRNA-processing ATP-dependent RNA helicase PRP5 (PRP5) (Saccharomyces cerevisiae (strain YJM789) (Baker's yeast)).